Consider the following 232-residue polypeptide: Large ribosomal subunit protein uL1 (232 aa).

Belongs to the universal ribosomal protein uL1 family. Part of the 50S ribosomal subunit.

In terms of biological role, binds directly to 23S rRNA. The L1 stalk is quite mobile in the ribosome, and is involved in E site tRNA release. Its function is as follows. Protein L1 is also a translational repressor protein, it controls the translation of the L11 operon by binding to its mRNA. The chain is Large ribosomal subunit protein uL1 from Chlamydia pneumoniae (Chlamydophila pneumoniae).